Here is an 80-residue protein sequence, read N- to C-terminus: Raniseptin-8 (80 aa).

A signal peptide spans 1–22 (MAFLKKSLFLVLFLGIVSLSIC). The propeptide occupies 23-49 (EEEKREGEEEEKQEEENEELSEEELRE). Residues 27–46 (REGEEEEKQEEENEELSEEE) form a disordered region. Positions 30–44 (EEEEKQEEENEELSE) are enriched in acidic residues.

This sequence belongs to the frog skin active peptide (FSAP) family. Dermaseptin subfamily. As to expression, expressed by the skin glands.

Its subcellular location is the secreted. In terms of biological role, has antibacterial activity. The protein is Raniseptin-8 of Boana raniceps (Chaco tree frog).